The following is a 550-amino-acid chain: Silent protein UshA(0) (550 aa).

The first 25 residues, 1 to 25, serve as a signal peptide directing secretion; that stretch reads MKFLKRGVALALLAAFALTTQPAQA. Residues aspartate 41, histidine 43, aspartate 84, asparagine 116, histidine 217, histidine 252, and glutamine 254 each contribute to the a divalent metal cation site. Cysteine 258 and cysteine 275 are oxidised to a cystine. Substrate-binding positions include phenylalanine 429 and 498 to 504; that span reads FNATGGD.

This sequence belongs to the 5'-nucleotidase family. The cofactor is a divalent metal cation.

It localises to the periplasm. The polypeptide is Silent protein UshA(0) (ushA) (Salmonella typhimurium (strain LT2 / SGSC1412 / ATCC 700720)).